The following is a 308-amino-acid chain: HPr kinase/phosphorylase (308 aa).

Active-site residues include histidine 138 and lysine 159. 153 to 160 (GESGLGKS) is an ATP binding site. Serine 160 contacts Mg(2+). Aspartate 177 acts as the Proton acceptor; for phosphorylation activity. Proton donor; for dephosphorylation activity in catalysis. Residues 201–210 (LEVRGLGLLD) are important for the catalytic mechanism of both phosphorylation and dephosphorylation. Residue glutamate 202 participates in Mg(2+) binding. Residue arginine 243 is part of the active site. Positions 264 to 269 (QVAAGR) are important for the catalytic mechanism of dephosphorylation.

The protein belongs to the HPrK/P family. As to quaternary structure, homohexamer. It depends on Mg(2+) as a cofactor.

It carries out the reaction [HPr protein]-L-serine + ATP = [HPr protein]-O-phospho-L-serine + ADP + H(+). It catalyses the reaction [HPr protein]-O-phospho-L-serine + phosphate + H(+) = [HPr protein]-L-serine + diphosphate. Functionally, catalyzes the ATP- as well as the pyrophosphate-dependent phosphorylation of a specific serine residue in HPr, a phosphocarrier protein of the phosphoenolpyruvate-dependent sugar phosphotransferase system (PTS). HprK/P also catalyzes the pyrophosphate-producing, inorganic phosphate-dependent dephosphorylation (phosphorolysis) of seryl-phosphorylated HPr (P-Ser-HPr). The polypeptide is HPr kinase/phosphorylase (Bordetella pertussis (strain Tohama I / ATCC BAA-589 / NCTC 13251)).